The chain runs to 397 residues: Nuclear egress protein 2 (397 aa).

Over 1-358 the chain is Perinuclear space; that stretch reads MEMNKVLHQD…GPSRPQSGPW (358 aa). 2 disordered regions span residues 205–245 and 291–332; these read RTAG…PPPP and AAAG…PSLE. Serine 216 bears the Phosphoserine mark. Composition is skewed to low complexity over residues 224–239 and 291–301; these read PSCSPTMVAAGGAAAG and AAAGQDVGGSA. Positions 310 to 322 are enriched in basic residues; the sequence is SRRRGVSTHHRHP. Residues 359–381 traverse the membrane as a helical segment; that stretch reads LPARFATLGPLVLALLLVLALLW. The Nuclear portion of the chain corresponds to 382 to 397; it reads RGHGQSSSPTRSAHRD.

This sequence belongs to the herpesviridae NEC2 protein family. Forms a heterohexameric complex with NEC1. Interacts with host UBA7 and RNF170; this interaction promotes UBA7 proteasomal degradation. In terms of processing, phosphorylated. Phosphorylation by viral kinase UL97 at Ser-216 plays an important role for correct viral nuclear egress complex (NEC) localization.

The protein resides in the host nucleus inner membrane. In terms of biological role, plays an essential role in virion nuclear egress, the first step of virion release from infected cell. Within the host nucleus, NEC1 interacts with the newly formed capsid through the vertexes and directs it to the inner nuclear membrane by associating with NEC2. Induces the budding of the capsid at the inner nuclear membrane as well as its envelopment into the perinuclear space. There, the NEC1/NEC2 complex promotes the fusion of the enveloped capsid with the outer nuclear membrane and the subsequent release of the viral capsid into the cytoplasm where it will reach the secondary budding sites in the host Golgi or trans-Golgi network. Inhibits host ISGylation and subsequent innate antiviral response by targeting host UBA7 for proteasomal degradation. This chain is Nuclear egress protein 2, found in Human cytomegalovirus (strain AD169) (HHV-5).